The sequence spans 1403 residues: Envelopment polyprotein (1403 aa).

Positions 1-17 (MLLNIVLISNLACLAFA) are cleaved as a signal peptide. The Lumenal portion of the chain corresponds to 18 to 209 (LPLKEGTRGS…ELMIESFCTN (192 aa)). Asn40 is a glycosylation site (N-linked (GlcNAc...) asparagine; by host). Residues 210-230 (LELILLVTFILVGSVMMMILT) form a helical membrane-spanning segment. Residues 231–314 (KTYIVYVFIP…PKTRKLCKSK (84 aa)) lie on the Cytoplasmic side of the membrane. A helical transmembrane segment spans residues 315-335 (ISNIVLCVITSLIFFSFITPI). Residues 336–361 (SSQCIDIEKLPDEYITCKRELANIKS) lie on the Lumenal side of the membrane. Residues 362–382 (LTIDDTYSFIYSCTCIIVLIL) traverse the membrane as a helical segment. Over 383 to 448 (LKKAAKYILY…FKFESSYNRT (66 aa)) the chain is Cytoplasmic. A helical membrane pass occupies residues 449-469 (GLIIFMLLLVPTIVMTQETSI). At 470-1361 (NCKNIQSTQL…GNLSFYWRLT (892 aa)) the chain is on the lumenal side. Cysteines 471 and 487 form a disulfide. Asn493 carries N-linked (GlcNAc...) asparagine; by host glycosylation. 3 cysteine pairs are disulfide-bonded: Cys523–Cys550, Cys580–Cys589, and Cys591–Cys598. 2 N-linked (GlcNAc...) asparagine; by host glycosylation sites follow: Asn686 and Asn1353. Residues 1362–1382 (IYIIISLIMLILFLYILIPLC) form a helical membrane-spanning segment. At 1383 to 1403 (KRLKGLLEYNERIYQMENKFK) the chain is on the cytoplasmic side.

It belongs to the nairovirus envelope glycoprotein family. In terms of assembly, heterodimer with glycoprotein C; in prefusion state. As to quaternary structure, heterodimer with glycoprotein N; in prefusion state. Homotrimeric; in postfusion state. Specific enzymatic cleavage by host MBTPS1/S1P/SKI-1 endopeptidase yield glycoprotein N. Specific enzymatic cleavages by host furin-like protease and MBTPS1/S1P endopeptidase yield GP38. Post-translationally, glycosylated.

It is found in the host endoplasmic reticulum membrane. Its subcellular location is the virion membrane. It localises to the host Golgi apparatus membrane. In terms of biological role, glycoprotein C and glycoprotein N interact with each other and are present at the surface of the virion. Glycoprotein N probably locks the Gn-Gc complex in a prefusion state. Glycoprotein N and glycoprotein C are able to attach the virion to host cell receptors. This attachment induces virion internalization predominantly through clathrin-dependent endocytosis. Glycoprotein C and glycoprotein N interact with each other and are present at the surface of the virion. The spikes at the surface of the virion are formed by an N-terminal extension of glycoprotein C. Glycoprotein N and glycoprotein C are able to attach the virion to host cell receptors. This attachment induces virion internalization predominantly through clathrin-dependent endocytosis. Class II fusion protein that promotes fusion of viral membrane with host endosomal membrane after endocytosis of the virion. Exposure to potassium is necessary for the conformational change leading to fusion. This chain is Envelopment polyprotein (GP), found in Bos taurus (Bovine).